Consider the following 688-residue polypeptide: Hid-1 family protein P19A11.07c (688 aa).

It belongs to the hid-1 family.

The protein resides in the cytoplasm. It localises to the nucleus. The polypeptide is Hid-1 family protein P19A11.07c (Schizosaccharomyces pombe (strain 972 / ATCC 24843) (Fission yeast)).